The sequence spans 365 residues: DNA replication and repair protein RecF (365 aa).

Residue G30–T37 participates in ATP binding.

The protein belongs to the RecF family.

It localises to the cytoplasm. The RecF protein is involved in DNA metabolism; it is required for DNA replication and normal SOS inducibility. RecF binds preferentially to single-stranded, linear DNA. It also seems to bind ATP. In Streptococcus pneumoniae serotype 2 (strain D39 / NCTC 7466), this protein is DNA replication and repair protein RecF.